The following is a 196-amino-acid chain: Glutathione-specific gamma-glutamylcyclotransferase 1 (196 aa).

Residue 15 to 20 participates in substrate binding; the sequence is IFGYGS. Glu95 serves as the catalytic Proton acceptor.

It belongs to the gamma-glutamylcyclotransferase family. ChaC subfamily.

It is found in the cytoplasm. The protein resides in the cytosol. Its subcellular location is the golgi apparatus. The protein localises to the trans-Golgi network. The catalysed reaction is glutathione = L-cysteinylglycine + 5-oxo-L-proline. Functionally, catalyzes the cleavage of glutathione into 5-oxo-L-proline and a Cys-Gly dipeptide. Acts specifically on glutathione, but not on other gamma-glutamyl peptides. Glutathione depletion is an important factor for apoptosis initiation and execution. Acts as a pro-apoptotic component of the unfolded protein response pathway by mediating the pro-apoptotic effects of the ATF4-ATF3-DDIT3/CHOP cascade. Negative regulator of Notch signaling pathway involved in embryonic neurogenesis: acts by inhibiting Notch cleavage by furin, maintaining Notch in an immature inactive form, thereby promoting neurogenesis in embryos. The sequence is that of Glutathione-specific gamma-glutamylcyclotransferase 1 from Danio rerio (Zebrafish).